A 166-amino-acid chain; its full sequence is Ureidoglycolate lyase (166 aa).

It belongs to the ureidoglycolate lyase family. As to quaternary structure, homodimer. It depends on Ni(2+) as a cofactor.

The enzyme catalyses (S)-ureidoglycolate = urea + glyoxylate. The protein operates within nitrogen metabolism; (S)-allantoin degradation. Catalyzes the catabolism of the allantoin degradation intermediate (S)-ureidoglycolate, generating urea and glyoxylate. Involved in the utilization of allantoin as nitrogen source. The chain is Ureidoglycolate lyase from Agrobacterium fabrum (strain C58 / ATCC 33970) (Agrobacterium tumefaciens (strain C58)).